A 466-amino-acid polypeptide reads, in one-letter code: Flagellum-specific ATP synthase (466 aa).

194-201 (SSSGLGKS) provides a ligand contact to ATP.

It belongs to the ATPase alpha/beta chains family.

The protein resides in the cytoplasm. The enzyme catalyses ATP + H2O + 4 H(+)(in) = ADP + phosphate + 5 H(+)(out). Probable catalytic subunit of a protein translocase for flagellum-specific export, or a proton translocase involved in local circuits at the flagellum. May be involved in a specialized protein export pathway that proceeds without signal peptide cleavage. This Buchnera aphidicola subsp. Schizaphis graminum (strain Sg) protein is Flagellum-specific ATP synthase (fliI).